The following is a 119-amino-acid chain: MFSLKRQQGARFEYQARLFLESKGLQFVAANQSFSCGELDLIMRDQDTLVFVEVRQRKNAVFGSAVESVDWKKQKKWLNAASLWLAQQNRSLEDTDCRFDLIAFGKTTQDLEWIINFLD.

Belongs to the UPF0102 family.

The protein is UPF0102 protein PM0647 of Pasteurella multocida (strain Pm70).